Consider the following 269-residue polypeptide: Ribonuclease HII (269 aa).

The RNase H type-2 domain maps to 83 to 269 (YLIAGVDEVG…HRMSFLTNIL (187 aa)). A divalent metal cation-binding residues include aspartate 89, glutamate 90, and aspartate 185.

This sequence belongs to the RNase HII family. It depends on Mn(2+) as a cofactor. The cofactor is Mg(2+).

Its subcellular location is the cytoplasm. It carries out the reaction Endonucleolytic cleavage to 5'-phosphomonoester.. In terms of biological role, endonuclease that specifically degrades the RNA of RNA-DNA hybrids. The sequence is that of Ribonuclease HII from Clostridium botulinum (strain Langeland / NCTC 10281 / Type F).